A 359-amino-acid polypeptide reads, in one-letter code: Molybdenum import ATP-binding protein ModC (359 aa).

Residues 1–229 (MLELNFSQQL…SALRPWLQRE (229 aa)) form the ABC transporter domain. Residue 31 to 38 (GLSGAGKT) participates in ATP binding. Residues 289-354 (SSSIRNILPV…IKSVSFNRQN (66 aa)) form the Mop domain.

This sequence belongs to the ABC transporter superfamily. Molybdate importer (TC 3.A.1.8) family. In terms of assembly, the complex is composed of two ATP-binding proteins (ModC), two transmembrane proteins (ModB) and a solute-binding protein (ModA).

It localises to the cell inner membrane. It catalyses the reaction molybdate(out) + ATP + H2O = molybdate(in) + ADP + phosphate + H(+). In terms of biological role, part of the ABC transporter complex ModABC involved in molybdenum import. Responsible for energy coupling to the transport system. This chain is Molybdenum import ATP-binding protein ModC, found in Yersinia pseudotuberculosis serotype I (strain IP32953).